The following is a 412-amino-acid chain: Transforming growth factor beta-3 proprotein (412 aa).

The first 23 residues, methionine 1 to serine 23, serve as a signal peptide directing secretion. Residues asparagine 74, asparagine 135, and asparagine 142 are each glycosylated (N-linked (GlcNAc...) asparagine). The Cell attachment site signature appears at arginine 261–aspartate 263. Glutamine 293 is subject to N5-methylglutamine. 4 cysteine pairs are disulfide-bonded: cysteine 307-cysteine 316, cysteine 315-cysteine 378, cysteine 344-cysteine 409, and cysteine 348-cysteine 411.

This sequence belongs to the TGF-beta family. As to quaternary structure, interacts with ASPN. Latency-associated peptide: Homodimer; disulfide-linked. Latency-associated peptide: Interacts with Transforming growth factor beta-3 (TGF-beta-3) chain; interaction is non-covalent and maintains (TGF-beta-3) in a latent state. Latency-associated peptide: Interacts with LRRC32/GARP; leading to regulate activation of TGF-beta-3 and promote epithelial fusion during palate development. Latency-associated peptide: Interacts (via cell attachment site) with integrins, leading to release of the active TGF-beta-3. Transforming growth factor beta-3: Homodimer; disulfide-linked. Transforming growth factor beta-3: Interacts with TGF-beta receptors (TGFBR1 and TGFBR2), leading to signal transduction. In terms of processing, transforming growth factor beta-3 proprotein: The precursor proprotein is cleaved in the Golgi apparatus to form Transforming growth factor beta-3 (TGF-beta-3) and Latency-associated peptide (LAP) chains, which remain non-covalently linked, rendering TGF-beta-3 inactive. Post-translationally, methylated at Gln-293 by N6AMT1. In terms of tissue distribution, expressed in cardiomyocytes.

It localises to the secreted. Its subcellular location is the extracellular space. The protein resides in the extracellular matrix. In terms of biological role, transforming growth factor beta-3 proprotein: Precursor of the Latency-associated peptide (LAP) and Transforming growth factor beta-3 (TGF-beta-3) chains, which constitute the regulatory and active subunit of TGF-beta-3, respectively. Functionally, required to maintain the Transforming growth factor beta-3 (TGF-beta-3) chain in a latent state during storage in extracellular matrix. Associates non-covalently with TGF-beta-3 and regulates its activation via interaction with 'milieu molecules', such as LTBP1 and LRRC32/GARP, that control activation of TGF-beta-3. Interaction with integrins results in distortion of the Latency-associated peptide chain and subsequent release of the active TGF-beta-3. Its function is as follows. Transforming growth factor beta-3: Multifunctional protein that regulates embryogenesis and cell differentiation and is required in various processes such as secondary palate development. Activation into mature form follows different steps: following cleavage of the proprotein in the Golgi apparatus, Latency-associated peptide (LAP) and Transforming growth factor beta-3 (TGF-beta-3) chains remain non-covalently linked rendering TGF-beta-3 inactive during storage in extracellular matrix. At the same time, LAP chain interacts with 'milieu molecules', such as LTBP1 and LRRC32/GARP that control activation of TGF-beta-3 and maintain it in a latent state during storage in extracellular milieus. TGF-beta-3 is released from LAP by integrins: integrin-binding results in distortion of the LAP chain and subsequent release of the active TGF-beta-3. Once activated following release of LAP, TGF-beta-3 acts by binding to TGF-beta receptors (TGFBR1 and TGFBR2), which transduce signal. The protein is Transforming growth factor beta-3 proprotein (Tgfb3) of Rattus norvegicus (Rat).